The primary structure comprises 324 residues: Beta-ketoacyl-[acyl-carrier-protein] synthase III (324 aa).

Active-site residues include Cys113 and His251. Residues 252-256 form an ACP-binding region; it reads QANKR. Asn281 is a catalytic residue.

The protein belongs to the thiolase-like superfamily. FabH family. Homodimer.

The protein localises to the cytoplasm. The enzyme catalyses malonyl-[ACP] + acetyl-CoA + H(+) = 3-oxobutanoyl-[ACP] + CO2 + CoA. It participates in lipid metabolism; fatty acid biosynthesis. Functionally, catalyzes the condensation reaction of fatty acid synthesis by the addition to an acyl acceptor of two carbons from malonyl-ACP. Catalyzes the first condensation reaction which initiates fatty acid synthesis and may therefore play a role in governing the total rate of fatty acid production. Possesses both acetoacetyl-ACP synthase and acetyl transacylase activities. Its substrate specificity determines the biosynthesis of branched-chain and/or straight-chain of fatty acids. The polypeptide is Beta-ketoacyl-[acyl-carrier-protein] synthase III (Bartonella henselae (strain ATCC 49882 / DSM 28221 / CCUG 30454 / Houston 1) (Rochalimaea henselae)).